The primary structure comprises 685 residues: Sulfite reductase [ferredoxin], chloroplastic (685 aa).

The transit peptide at methionine 1–alanine 51 directs the protein to the chloroplast. [4Fe-4S] cluster contacts are provided by cysteine 495, cysteine 501, cysteine 541, and cysteine 545. Siroheme is bound at residue cysteine 545.

This sequence belongs to the nitrite and sulfite reductase 4Fe-4S domain family. In terms of assembly, monomer. Interacts with ferredoxin. Requires siroheme as cofactor. [4Fe-4S] cluster is required as a cofactor. Phosphorylated; this phosphorylation reduces DNA-binding. In terms of tissue distribution, expressed in leaves, stems, and roots.

The protein localises to the plastid. It is found in the chloroplast stroma. The protein resides in the chloroplast nucleoid. Its subcellular location is the plastid stroma. It carries out the reaction hydrogen sulfide + 6 oxidized [2Fe-2S]-[ferredoxin] + 3 H2O = sulfite + 6 reduced [2Fe-2S]-[ferredoxin] + 7 H(+). Its function is as follows. Essential protein with sulfite reductase activity required in assimilatory sulfate reduction pathway during both primary and secondary metabolism and thus involved in development and growth. DNA-binding protein that binds to both double-stranded and single-stranded DNA without significant sequence specificity to reversibly repress the transcriptional activity of chloroplast nucleoids by promoting DNA compaction and possibly regulate DNA replication. The protein is Sulfite reductase [ferredoxin], chloroplastic (SIR) of Pisum sativum (Garden pea).